We begin with the raw amino-acid sequence, 310 residues long: Homoserine O-acetyltransferase (310 aa).

Residue Cys-142 is the Acyl-thioester intermediate of the active site. Residues Lys-163 and Ser-192 each coordinate substrate. His-235 acts as the Proton acceptor in catalysis. Glu-237 is an active-site residue. Arg-249 provides a ligand contact to substrate.

It belongs to the MetA family.

Its subcellular location is the cytoplasm. The enzyme catalyses L-homoserine + acetyl-CoA = O-acetyl-L-homoserine + CoA. The protein operates within amino-acid biosynthesis; L-methionine biosynthesis via de novo pathway; O-acetyl-L-homoserine from L-homoserine: step 1/1. Transfers an acetyl group from acetyl-CoA to L-homoserine, forming acetyl-L-homoserine. In Agathobacter rectalis (strain ATCC 33656 / DSM 3377 / JCM 17463 / KCTC 5835 / VPI 0990) (Eubacterium rectale), this protein is Homoserine O-acetyltransferase.